Reading from the N-terminus, the 657-residue chain is Glycogen debranching enzyme (657 aa).

Residue D336 is the Nucleophile of the active site. Catalysis depends on E371, which acts as the Proton donor. Residues 460–479 (ANGEENRDGTNNNYSNNHGK) form a disordered region.

This sequence belongs to the glycosyl hydrolase 13 family.

The catalysed reaction is Hydrolysis of (1-&gt;6)-alpha-D-glucosidic linkages to branches with degrees of polymerization of three or four glucose residues in limit dextrin.. It participates in glycan degradation; glycogen degradation. In terms of biological role, removes maltotriose and maltotetraose chains that are attached by 1,6-alpha-linkage to the limit dextrin main chain, generating a debranched limit dextrin. This is Glycogen debranching enzyme from Escherichia coli O9:H4 (strain HS).